The chain runs to 147 residues: UPF0178 protein CV_1768 (147 aa).

The protein belongs to the UPF0178 family.

This chain is UPF0178 protein CV_1768, found in Chromobacterium violaceum (strain ATCC 12472 / DSM 30191 / JCM 1249 / CCUG 213 / NBRC 12614 / NCIMB 9131 / NCTC 9757 / MK).